Here is a 306-residue protein sequence, read N- to C-terminus: D-alanine--D-alanine ligase B (306 aa).

One can recognise an ATP-grasp domain in the interval 101–303; that stretch reads KLLWQGAGLP…FSQLVVRILE (203 aa). ATP is bound at residue 134 to 189; that stretch reads ISALGLPVIVKPSREGSSVGMSKVVAENALQDALRLAFQHDEEVLIEKWLSGPEFT. Residues Asp257, Glu270, and Asn272 each contribute to the Mg(2+) site.

It belongs to the D-alanine--D-alanine ligase family. Mg(2+) serves as cofactor. The cofactor is Mn(2+).

The protein localises to the cytoplasm. The catalysed reaction is 2 D-alanine + ATP = D-alanyl-D-alanine + ADP + phosphate + H(+). It participates in cell wall biogenesis; peptidoglycan biosynthesis. Functionally, cell wall formation. The sequence is that of D-alanine--D-alanine ligase B from Shigella flexneri.